The following is a 331-amino-acid chain: Beta-ketoacyl-[acyl-carrier-protein] synthase III (331 aa).

Active-site residues include C115 and H255. Positions 256–260 (QANFR) are ACP-binding. Residue N285 is part of the active site.

This sequence belongs to the thiolase-like superfamily. FabH family. As to quaternary structure, homodimer.

Its subcellular location is the cytoplasm. The catalysed reaction is malonyl-[ACP] + acetyl-CoA + H(+) = 3-oxobutanoyl-[ACP] + CO2 + CoA. It participates in lipid metabolism; fatty acid biosynthesis. Its function is as follows. Catalyzes the condensation reaction of fatty acid synthesis by the addition to an acyl acceptor of two carbons from malonyl-ACP. Catalyzes the first condensation reaction which initiates fatty acid synthesis and may therefore play a role in governing the total rate of fatty acid production. Possesses both acetoacetyl-ACP synthase and acetyl transacylase activities. Its substrate specificity determines the biosynthesis of branched-chain and/or straight-chain of fatty acids. This is Beta-ketoacyl-[acyl-carrier-protein] synthase III from Helicobacter pylori (strain J99 / ATCC 700824) (Campylobacter pylori J99).